A 444-amino-acid chain; its full sequence is Cysteine proteinase 2 (444 aa).

Residues M1 to A19 constitute a signal peptide (or 27). The propeptide at A20–S124 is activation peptide. Residues C147 and C188 are joined by a disulfide bond. The active site involves C150. N-linked (GlcNAc...) asparagine glycosylation occurs at N228. Active-site residues include H289 and N309. N372 carries N-linked (GlcNAc...) asparagine glycosylation.

The protein belongs to the peptidase C1 family.

The protein localises to the lysosome. Functionally, the cysteine proteinases have a potential role in host-parasite interaction and virulence. This Leishmania pifanoi protein is Cysteine proteinase 2 (CYS2).